We begin with the raw amino-acid sequence, 538 residues long: Putative cysteine ligase BshC (538 aa).

Residues 460 to 484 (KINEQIELLERMLKRNVEKKHEVEL) adopt a coiled-coil conformation.

This sequence belongs to the BshC family.

Its function is as follows. Involved in bacillithiol (BSH) biosynthesis. May catalyze the last step of the pathway, the addition of cysteine to glucosamine malate (GlcN-Mal) to generate BSH. The polypeptide is Putative cysteine ligase BshC (Bacillus thuringiensis (strain Al Hakam)).